A 1628-amino-acid chain; its full sequence is Lysine-specific histone demethylase 1 homolog 3 (1628 aa).

Positions 1–71 (MDGKEKKSGS…KKLSALGKDS (71 aa)) are disordered. The segment covering 19–28 (FDDDADDDEP) has biased composition (acidic residues). Basic and acidic residues predominate over residues 43 to 64 (KDKVETESTGKQRQKQVVEKKL). The region spanning 378–478 (GRAAAVTAGL…AGISSVNGKA (101 aa)) is the SWIRM domain. Residues E647, R649, R655, and E1077 each coordinate FAD. The interval 1271-1317 (SGKKSLRQANTTNTSRIRRKLNSPDTDSKGKLSNGNDVKTDEEFEDN) is disordered.

The protein belongs to the flavin monoamine oxidase family. Requires FAD as cofactor.

Probable histone demethylase that reduces the levels of histone H3 'Lys-4' methylation in chromatin. In Arabidopsis thaliana (Mouse-ear cress), this protein is Lysine-specific histone demethylase 1 homolog 3 (LDL3).